Consider the following 772-residue polypeptide: A type blood N-acetyl-alpha-D-galactosamine deacetylase (772 aa).

The first 27 residues, 1 to 27 (MRNRRKAVSLLTGLLVTAQLFPTAALA), serve as a signal peptide directing secretion. Residues Ser-87 and His-123 each coordinate substrate. Position 126 (Asp-126) interacts with a divalent metal cation. Positions 180–402 (WSKPTSDAER…WRIGYAENSF (223 aa)) are deacetylase activity. Residue Tyr-236 coordinates substrate. His-278 is an a divalent metal cation binding site. In terms of domain architecture, F5/8 type C spans 494–605 (SDDLEIAVVE…KDLVASGSDW (112 aa)). Positions 502 to 765 (VENPYTLIPQ…VCVSPVVDFD (264 aa)) are CBM32 carbohydrate-binding domain. The not required for activity on soluble substrates stretch occupies residues 515-772 (TATATSVYGG…DFDYFSYVGE (258 aa)).

A divalent metal cation serves as cofactor.

The enzyme catalyses an N-acetyl-alpha-D-galactosaminyl-(1-&gt;3)-[alpha-L-fucosyl-(1-&gt;2)]-beta-D-galactosyl derivative + H2O = an alpha-D-galactosaminyl-(1-&gt;3)-[alpha-L-fucosyl-(1-&gt;2)]-beta-D-galactosyl derivative + acetate. Its activity is regulated as follows. Inhibited by EDTA. In terms of biological role, one of an enzyme pair that work together to convert the A antigen to the H antigen of the O blood type, which together release galactosamine. Catalyzes the first step in the conversion, generating the substrate for the subsequent enzyme (FpGalNase, AC P0DTR5). Works on many different A antigen subtypes. Glu-90 probably activates a nucleophilic water molecule to start the deacetylation reaction. The polypeptide is A type blood N-acetyl-alpha-D-galactosamine deacetylase (Flavonifractor plautii (Fusobacterium plautii)).